The sequence spans 493 residues: Glutamate synthase [NADPH] small chain (493 aa).

299 to 313 is an NADP(+) binding site; it reads GGGDTGADCVATALR.

Belongs to the glutamate synthase family. As to quaternary structure, aggregate of 4 catalytic active heterodimers, consisting of a large and a small subunit.

The enzyme catalyses 2 L-glutamate + NADP(+) = L-glutamine + 2-oxoglutarate + NADPH + H(+). It functions in the pathway amino-acid biosynthesis; L-glutamate biosynthesis via GLT pathway; L-glutamate from 2-oxoglutarate and L-glutamine (NADP(+) route): step 1/1. Its pathway is energy metabolism; nitrogen metabolism. This chain is Glutamate synthase [NADPH] small chain (gltB), found in Bacillus subtilis (strain 168).